A 356-amino-acid chain; its full sequence is Dual-specificity RNA methyltransferase RlmN (356 aa).

The active-site Proton acceptor is glutamate 87. Residues 106–339 (QEAKYTICVS…CTIRDSKGID (234 aa)) enclose the Radical SAM core domain. Cysteines 113 and 344 form a disulfide. Positions 120, 124, and 127 each coordinate [4Fe-4S] cluster. S-adenosyl-L-methionine-binding positions include 170 to 171 (GE), serine 202, 225 to 227 (SLH), and asparagine 301. The S-methylcysteine intermediate role is filled by cysteine 344.

It belongs to the radical SAM superfamily. RlmN family. It depends on [4Fe-4S] cluster as a cofactor.

Its subcellular location is the cytoplasm. It catalyses the reaction adenosine(2503) in 23S rRNA + 2 reduced [2Fe-2S]-[ferredoxin] + 2 S-adenosyl-L-methionine = 2-methyladenosine(2503) in 23S rRNA + 5'-deoxyadenosine + L-methionine + 2 oxidized [2Fe-2S]-[ferredoxin] + S-adenosyl-L-homocysteine. It carries out the reaction adenosine(37) in tRNA + 2 reduced [2Fe-2S]-[ferredoxin] + 2 S-adenosyl-L-methionine = 2-methyladenosine(37) in tRNA + 5'-deoxyadenosine + L-methionine + 2 oxidized [2Fe-2S]-[ferredoxin] + S-adenosyl-L-homocysteine. Functionally, specifically methylates position 2 of adenine 2503 in 23S rRNA and position 2 of adenine 37 in tRNAs. m2A2503 modification seems to play a crucial role in the proofreading step occurring at the peptidyl transferase center and thus would serve to optimize ribosomal fidelity. The sequence is that of Dual-specificity RNA methyltransferase RlmN from Sulfurimonas denitrificans (strain ATCC 33889 / DSM 1251) (Thiomicrospira denitrificans (strain ATCC 33889 / DSM 1251)).